The sequence spans 294 residues: Glutamyl-Q tRNA(Asp) synthetase (294 aa).

Residues arginine 7–serine 11 and glutamate 43 contribute to the L-glutamate site. Positions proline 10–serine 20 match the 'HIGH' region motif. Zn(2+) is bound by residues cysteine 99, cysteine 101, tyrosine 113, and cysteine 117. The L-glutamate site is built by tyrosine 168 and arginine 186. Positions lysine 224 to glutamine 228 match the 'KMSKS' region motif. Lysine 227 lines the ATP pocket.

The protein belongs to the class-I aminoacyl-tRNA synthetase family. GluQ subfamily. It depends on Zn(2+) as a cofactor.

Catalyzes the tRNA-independent activation of glutamate in presence of ATP and the subsequent transfer of glutamate onto a tRNA(Asp). Glutamate is transferred on the 2-amino-5-(4,5-dihydroxy-2-cyclopenten-1-yl) moiety of the queuosine in the wobble position of the QUC anticodon. This Vibrio parahaemolyticus serotype O3:K6 (strain RIMD 2210633) protein is Glutamyl-Q tRNA(Asp) synthetase.